A 191-amino-acid polypeptide reads, in one-letter code: Accessory gene regulator protein B (191 aa).

The next 5 membrane-spanning stretches (helical) occupy residues 45 to 65 (IVVY…TVHL), 81 to 101 (STFA…WILI), 108 to 128 (IFMI…SPAI), 144 to 164 (ITAI…KQPF), and 165 to 185 (NELV…IFFP).

This sequence belongs to the AgrB family.

Its subcellular location is the cell membrane. Functionally, essential for the production of a quorum sensing system signal molecule, the autoinducing peptide (AIP). This quorum sensing system is responsible for the regulation of the expression of virulence factor genes. Involved in the proteolytic processing of AgrD, the precursor of AIP. This chain is Accessory gene regulator protein B, found in Staphylococcus carnosus (strain TM300).